Consider the following 353-residue polypeptide: Putative transport protein YrrI (353 aa).

Helical transmembrane passes span Leu8–Leu28, Leu37–Leu57, Ile77–Ile97, Phe165–Met185, Leu220–Pro240, Leu243–Gly263, Leu269–Leu289, and Val311–Leu331.

It belongs to the autoinducer-2 exporter (AI-2E) (TC 2.A.86) family.

The protein localises to the cell membrane. The polypeptide is Putative transport protein YrrI (yrrI) (Bacillus subtilis (strain 168)).